The chain runs to 169 residues: Small ribosomal subunit protein uS5 (169 aa).

The region spanning 14-77 is the S5 DRBM domain; that stretch reads LQEKLVAVRR…EQARKNMRKV (64 aa).

This sequence belongs to the universal ribosomal protein uS5 family. Part of the 30S ribosomal subunit. Contacts proteins S4 and S8.

Functionally, with S4 and S12 plays an important role in translational accuracy. Its function is as follows. Located at the back of the 30S subunit body where it stabilizes the conformation of the head with respect to the body. This is Small ribosomal subunit protein uS5 from Methylococcus capsulatus (strain ATCC 33009 / NCIMB 11132 / Bath).